The chain runs to 157 residues: Protein Smg (157 aa).

Belongs to the Smg family.

This chain is Protein Smg, found in Shigella boydii serotype 4 (strain Sb227).